The chain runs to 420 residues: Protein maelstrom homolog (420 aa).

Residues 4–73 constitute a DNA-binding region (HMG box); it reads RRASRNAYYF…AQGKDSGPSE (70 aa). Disordered regions lie at residues 62 to 94, 341 to 372, and 392 to 420; these read RAAQ…KQNV, GFSH…GQNS, and NIHK…SSLS. Composition is skewed to polar residues over residues 344 to 358 and 392 to 407; these read HFSS…NTPT and NIHK…SPYT.

Belongs to the maelstrom family. Interacts with SMARCB1, SIN3B and DDX4. Interacts with piRNA-associated proteins TDRD1, PIWIL1 and PIWIL2. Interacts with TEX19.

The protein resides in the cytoplasm. It localises to the nucleus. In terms of biological role, plays a central role during spermatogenesis by repressing transposable elements and preventing their mobilization, which is essential for the germline integrity. Acts via the piRNA metabolic process, which mediates the repression of transposable elements during meiosis by forming complexes composed of piRNAs and Piwi proteins and governs the methylation and subsequent repression of transposons. Its association with piP-bodies suggests a participation in the secondary piRNAs metabolic process. Required for the localization of germ-cell factors to the meiotic nuage. The protein is Protein maelstrom homolog (MAEL) of Bos taurus (Bovine).